Reading from the N-terminus, the 765-residue chain is Phosphoribosylformylglycinamidine synthase subunit PurL (765 aa).

The segment covering M1–I13 has biased composition (polar residues). The interval M1 to L32 is disordered. H65 is a catalytic residue. ATP is bound by residues Y68 and K112. E114 is a binding site for Mg(2+). Substrate is bound by residues S115–H118 and R137. Residue H116 is the Proton acceptor of the active site. Position 138 (D138) interacts with Mg(2+). Position 263 (Q263) interacts with substrate. Residue D291 participates in Mg(2+) binding. Substrate is bound at residue E335–Q337. Positions 523 and 560 each coordinate ATP. A Mg(2+)-binding site is contributed by N561. A substrate-binding site is contributed by S563.

Belongs to the FGAMS family. Monomer. Part of the FGAM synthase complex composed of 1 PurL, 1 PurQ and 2 PurS subunits.

Its subcellular location is the cytoplasm. The enzyme catalyses N(2)-formyl-N(1)-(5-phospho-beta-D-ribosyl)glycinamide + L-glutamine + ATP + H2O = 2-formamido-N(1)-(5-O-phospho-beta-D-ribosyl)acetamidine + L-glutamate + ADP + phosphate + H(+). It functions in the pathway purine metabolism; IMP biosynthesis via de novo pathway; 5-amino-1-(5-phospho-D-ribosyl)imidazole from N(2)-formyl-N(1)-(5-phospho-D-ribosyl)glycinamide: step 1/2. Part of the phosphoribosylformylglycinamidine synthase complex involved in the purines biosynthetic pathway. Catalyzes the ATP-dependent conversion of formylglycinamide ribonucleotide (FGAR) and glutamine to yield formylglycinamidine ribonucleotide (FGAM) and glutamate. The FGAM synthase complex is composed of three subunits. PurQ produces an ammonia molecule by converting glutamine to glutamate. PurL transfers the ammonia molecule to FGAR to form FGAM in an ATP-dependent manner. PurS interacts with PurQ and PurL and is thought to assist in the transfer of the ammonia molecule from PurQ to PurL. This is Phosphoribosylformylglycinamidine synthase subunit PurL from Mycolicibacterium paratuberculosis (strain ATCC BAA-968 / K-10) (Mycobacterium paratuberculosis).